We begin with the raw amino-acid sequence, 127 residues long: Small ribosomal subunit protein uS12 (127 aa).

Asp89 carries the 3-methylthioaspartic acid modification. The interval 101 to 127 (ALDTSGVAGRTQRRSKYGAKRPKEAKK) is disordered. Residues 111–127 (TQRRSKYGAKRPKEAKK) show a composition bias toward basic residues.

Belongs to the universal ribosomal protein uS12 family. In terms of assembly, part of the 30S ribosomal subunit. Contacts proteins S8 and S17. May interact with IF1 in the 30S initiation complex.

With S4 and S5 plays an important role in translational accuracy. Its function is as follows. Interacts with and stabilizes bases of the 16S rRNA that are involved in tRNA selection in the A site and with the mRNA backbone. Located at the interface of the 30S and 50S subunits, it traverses the body of the 30S subunit contacting proteins on the other side and probably holding the rRNA structure together. The combined cluster of proteins S8, S12 and S17 appears to hold together the shoulder and platform of the 30S subunit. This is Small ribosomal subunit protein uS12 from Flavobacterium johnsoniae (strain ATCC 17061 / DSM 2064 / JCM 8514 / BCRC 14874 / CCUG 350202 / NBRC 14942 / NCIMB 11054 / UW101) (Cytophaga johnsonae).